A 212-amino-acid polypeptide reads, in one-letter code: Neuroendocrine protein 7B2 (212 aa).

The first 26 residues, 1–26, serve as a signal peptide directing secretion; the sequence is MVSRMVSTMLSGLLFWLASGWTPAFA. A disulfide bond links Cys-120 and Cys-130. Ser-141 and Ser-205 each carry phosphoserine. A disordered region spans residues 174-212; the sequence is GGERRKRRSVNPYLQGQRLDNVVAKKSVPHFSDEDKDPE.

This sequence belongs to the 7B2 family. In terms of assembly, interacts with PCSK2/PC2 early in the secretory pathway. Dissociation occurs at later stages. Proteolytically cleaved in the Golgi by a furin-like convertase to generate bioactive peptides. In terms of processing, sulfated on tyrosine residues.

The protein resides in the secreted. In terms of biological role, acts as a molecular chaperone for PCSK2/PC2, preventing its premature activation in the regulated secretory pathway. Binds to inactive PCSK2 in the endoplasmic reticulum and facilitates its transport from there to later compartments of the secretory pathway where it is proteolytically matured and activated. Also required for cleavage of PCSK2 but does not appear to be involved in its folding. Plays a role in regulating pituitary hormone secretion. The C-terminal peptide inhibits PCSK2 in vitro. This is Neuroendocrine protein 7B2 (SCG5) from Homo sapiens (Human).